The following is a 700-amino-acid chain: Sex comb on midleg-like protein 2 (700 aa).

Residues 1–33 (MGQTVNEDSMDVKKENQEKTPQSSTSSVQRDDF) form a disordered region. Residues 19-28 (KTPQSSTSSV) are compositionally biased toward polar residues. 2 MBT repeats span residues 33–131 (FHWE…LQPP) and 139–240 (SSWP…LQPP). Residues 253 to 281 (TESSPSEASQHSMQSPQKTTLILPTQQVR) show a composition bias toward polar residues. Disordered regions lie at residues 253–320 (TESS…EKPL) and 466–550 (PFSS…SSLN). Residues serine 256, serine 261, serine 267, serine 299, and serine 300 each carry the phosphoserine modification. Phosphothreonine is present on threonine 305. Basic and acidic residues predominate over residues 476 to 495 (SSAEHDKNQSAKEDVTERQS). Phosphoserine is present on serine 499. Position 503 is a phosphothreonine (threonine 503). Serine 511 is modified (phosphoserine). Lysine 518 is covalently cross-linked (Glycyl lysine isopeptide (Lys-Gly) (interchain with G-Cter in SUMO2)). At serine 522 the chain carries Phosphoserine. Positions 535–545 (PKEENLSEDSK) are enriched in basic and acidic residues. Lysine 536 participates in a covalent cross-link: Glycyl lysine isopeptide (Lys-Gly) (interchain with G-Cter in SUMO2). Serine 570, serine 583, serine 590, and serine 594 each carry phosphoserine. A compositionally biased stretch (polar residues) spans 575-584 (RSVPGTTSSP). The disordered stretch occupies residues 575–594 (RSVPGTTSSPLVGDISPKSS). Residues lysine 599 and lysine 605 each participate in a glycyl lysine isopeptide (Lys-Gly) (interchain with G-Cter in SUMO2) cross-link. One can recognise an SAM domain in the interval 631–700 (WSVDEVIQFM…IEKLKEGKYS (70 aa)).

This sequence belongs to the SCM family. Highly expressed in placenta, thymus and testis. Detected at lower levels in brain, liver, skeletal muscle, pancreas and ovary.

The protein resides in the nucleus. In terms of biological role, putative Polycomb group (PcG) protein. PcG proteins act by forming multiprotein complexes, which are required to maintain the transcriptionally repressive state of homeotic genes throughout development. This chain is Sex comb on midleg-like protein 2 (SCML2), found in Homo sapiens (Human).